The primary structure comprises 137 residues: Small ribosomal subunit protein uS12 (137 aa).

The disordered stretch occupies residues 1–20 (MPTTNQLVNRGRTSKVQKQN). The residue at position 102 (aspartate 102) is a 3-methylthioaspartic acid.

The protein belongs to the universal ribosomal protein uS12 family. In terms of assembly, part of the 30S ribosomal subunit. Contacts proteins S8 and S17. May interact with IF1 in the 30S initiation complex.

With S4 and S5 plays an important role in translational accuracy. Its function is as follows. Interacts with and stabilizes bases of the 16S rRNA that are involved in tRNA selection in the A site and with the mRNA backbone. Located at the interface of the 30S and 50S subunits, it traverses the body of the 30S subunit contacting proteins on the other side and probably holding the rRNA structure together. The combined cluster of proteins S8, S12 and S17 appears to hold together the shoulder and platform of the 30S subunit. The sequence is that of Small ribosomal subunit protein uS12 from Mycoplasmopsis synoviae (strain 53) (Mycoplasma synoviae).